A 364-amino-acid polypeptide reads, in one-letter code: Biotin synthase (364 aa).

Positions 68–303 (CCGNTVDLCS…QQILRYAGGR (236 aa)) constitute a Radical SAM core domain. The [4Fe-4S] cluster site is built by C86, C90, and C93. Positions 131, 168, 228, and 298 each coordinate [2Fe-2S] cluster.

This sequence belongs to the radical SAM superfamily. Biotin synthase family. Homodimer. [4Fe-4S] cluster is required as a cofactor. Requires [2Fe-2S] cluster as cofactor.

The catalysed reaction is (4R,5S)-dethiobiotin + (sulfur carrier)-SH + 2 reduced [2Fe-2S]-[ferredoxin] + 2 S-adenosyl-L-methionine = (sulfur carrier)-H + biotin + 2 5'-deoxyadenosine + 2 L-methionine + 2 oxidized [2Fe-2S]-[ferredoxin]. It participates in cofactor biosynthesis; biotin biosynthesis; biotin from 7,8-diaminononanoate: step 2/2. Its function is as follows. Catalyzes the conversion of dethiobiotin (DTB) to biotin by the insertion of a sulfur atom into dethiobiotin via a radical-based mechanism. The protein is Biotin synthase of Microcystis aeruginosa (strain NIES-843 / IAM M-2473).